The following is a 137-amino-acid chain: Large ribosomal subunit protein eL28 (137 aa).

N-acetylserine is present on S2. Residues K58 and K65 each participate in a glycyl lysine isopeptide (Lys-Gly) (interchain with G-Cter in SUMO2) cross-link. Residue S115 is modified to Phosphoserine.

This sequence belongs to the eukaryotic ribosomal protein eL28 family. In terms of assembly, component of the large ribosomal subunit.

It localises to the cytoplasm. Component of the large ribosomal subunit. The ribosome is a large ribonucleoprotein complex responsible for the synthesis of proteins in the cell. The protein is Large ribosomal subunit protein eL28 (RPL28) of Bos taurus (Bovine).